The chain runs to 114 residues: Immunoglobulin kappa variable 6D-21 (114 aa).

Residues 1 to 19 (MSPSQLIGFLLLWVPASRG) form the signal peptide. The tract at residues 20 to 42 (EIVLTQSPDFQSVTPKEKVTITC) is framework-1. Residues 20-114 (EIVLTQSPDF…YYCHQSSSLP (95 aa)) enclose the Ig-like domain. Cys42 and Cys107 are disulfide-bonded. A complementarity-determining-1 region spans residues 43–53 (RASQSIGSSLH). The segment at 54–68 (WYQQKPDQSPKLLIK) is framework-2. The complementarity-determining-2 stretch occupies residues 69–75 (YASQSIS). Positions 76-107 (GVPSRFSGSGSGTDFTLTINSLEAEDAAAYYC) are framework-3. The segment at 108 to 114 (HQSSSLP) is complementarity-determining-3.

As to quaternary structure, immunoglobulins are composed of two identical heavy chains and two identical light chains; disulfide-linked.

The protein resides in the secreted. It is found in the cell membrane. Functionally, v region of the variable domain of immunoglobulin light chains that participates in the antigen recognition. Immunoglobulins, also known as antibodies, are membrane-bound or secreted glycoproteins produced by B lymphocytes. In the recognition phase of humoral immunity, the membrane-bound immunoglobulins serve as receptors which, upon binding of a specific antigen, trigger the clonal expansion and differentiation of B lymphocytes into immunoglobulins-secreting plasma cells. Secreted immunoglobulins mediate the effector phase of humoral immunity, which results in the elimination of bound antigens. The antigen binding site is formed by the variable domain of one heavy chain, together with that of its associated light chain. Thus, each immunoglobulin has two antigen binding sites with remarkable affinity for a particular antigen. The variable domains are assembled by a process called V-(D)-J rearrangement and can then be subjected to somatic hypermutations which, after exposure to antigen and selection, allow affinity maturation for a particular antigen. This chain is Immunoglobulin kappa variable 6D-21, found in Homo sapiens (Human).